We begin with the raw amino-acid sequence, 226 residues long: RPA-interacting protein A (226 aa).

An interaction with importin beta region spans residues 1 to 45 (MEAERRHRALYKGTTPPWKETYRKRCVERLKRNRSKLLDKFRQVG). Residues 49-171 (HGGVGGSFLV…QCGVYINTQS (123 aa)) form an interaction with RPA1 region. The RIP-type zinc-finger motif lies at 144–219 (CPVCNRNYLT…ASLFMSCQEC (76 aa)).

As to quaternary structure, interacts directly with the rpa1 subunit of RPA complex. Interacts with importin beta, but not with importin alpha. Forms a complex with the RPA complex and importin beta, which is dissociated by Ran-GTP.

The protein localises to the nucleus. In terms of biological role, mediates the import of RPA complex into the nucleus, via its interaction with importin beta. This is RPA-interacting protein A (rpain-a) from Xenopus laevis (African clawed frog).